The sequence spans 137 residues: Nucleoside diphosphate kinase (137 aa).

The ATP site is built by K9, F58, R86, T92, R103, and N113. H121 functions as the Pros-phosphohistidine intermediate in the catalytic mechanism.

It belongs to the NDK family. As to quaternary structure, homotetramer. Mg(2+) serves as cofactor.

It is found in the cytoplasm. The enzyme catalyses a 2'-deoxyribonucleoside 5'-diphosphate + ATP = a 2'-deoxyribonucleoside 5'-triphosphate + ADP. It carries out the reaction a ribonucleoside 5'-diphosphate + ATP = a ribonucleoside 5'-triphosphate + ADP. Its function is as follows. Major role in the synthesis of nucleoside triphosphates other than ATP. The ATP gamma phosphate is transferred to the NDP beta phosphate via a ping-pong mechanism, using a phosphorylated active-site intermediate. In Streptococcus pneumoniae (strain Hungary19A-6), this protein is Nucleoside diphosphate kinase.